The primary structure comprises 336 residues: Fructose-1,6-bisphosphatase class 1 (336 aa).

Glutamate 98, aspartate 117, leucine 119, and aspartate 120 together coordinate Mg(2+). Residues 120–123 (DGSS), asparagine 210, and lysine 276 contribute to the substrate site. Glutamate 282 lines the Mg(2+) pocket.

The protein belongs to the FBPase class 1 family. In terms of assembly, homotetramer. The cofactor is Mg(2+).

It is found in the cytoplasm. It catalyses the reaction beta-D-fructose 1,6-bisphosphate + H2O = beta-D-fructose 6-phosphate + phosphate. The protein operates within carbohydrate biosynthesis; gluconeogenesis. The polypeptide is Fructose-1,6-bisphosphatase class 1 (Caulobacter vibrioides (strain ATCC 19089 / CIP 103742 / CB 15) (Caulobacter crescentus)).